Reading from the N-terminus, the 611-residue chain is Cilia- and flagella-associated protein 100 (611 aa).

The span at 1 to 17 (MSEIPSTIVSKNMTNDK) shows a compositional bias: polar residues. Residues 1-57 (MSEIPSTIVSKNMTNDKNSLESMNISSSSSTEENPKKQARKNEEHGPDPSANPFHLS) are disordered. The segment covering 20 to 32 (LESMNISSSSSTE) has biased composition (low complexity). The segment covering 33–47 (ENPKKQARKNEEHGP) has biased composition (basic and acidic residues). Coiled coils occupy residues 101–128 (SLRR…RAFR), 164–203 (ALDV…FDEF), and 230–257 (LEIR…KHYK). 2 disordered regions span residues 287–323 (EVSE…GQGT) and 338–380 (SPSY…GEEP). Residues 338-357 (SPSYLSSPQQGSQPSESSGG) are compositionally biased toward low complexity. Coiled coils occupy residues 393–432 (VFRE…MDRE) and 526–578 (QVKI…RGRT).

It belongs to the CFAP100 family.

The protein resides in the cytoplasm. It localises to the cytoskeleton. It is found in the cilium axoneme. Its function is as follows. May play a role in ciliary/flagellar motility by regulating the assembly and the activity of axonemal inner dynein arm. The sequence is that of Cilia- and flagella-associated protein 100 from Homo sapiens (Human).